Consider the following 295-residue polypeptide: tRNA dimethylallyltransferase (295 aa).

Residue 11–18 (GPTVSGKS) coordinates ATP. Residue 13-18 (TVSGKS) participates in substrate binding. Interaction with substrate tRNA regions lie at residues 36-39 (DSMQ) and 158-162 (QRIIR).

Belongs to the IPP transferase family. In terms of assembly, monomer. Requires Mg(2+) as cofactor.

It catalyses the reaction adenosine(37) in tRNA + dimethylallyl diphosphate = N(6)-dimethylallyladenosine(37) in tRNA + diphosphate. Functionally, catalyzes the transfer of a dimethylallyl group onto the adenine at position 37 in tRNAs that read codons beginning with uridine, leading to the formation of N6-(dimethylallyl)adenosine (i(6)A). This is tRNA dimethylallyltransferase from Bartonella quintana (strain Toulouse) (Rochalimaea quintana).